A 143-amino-acid chain; its full sequence is Nitrosuccinic acid decarboxylase npaB (143 aa).

Belongs to the carboxymuconolactone decarboxylase family. The cofactor is Mg(2+).

It participates in mycotoxin biosynthesis. In terms of biological role, nitrosuccinic acid decarboxylase; part of the gene cluster that mediates the biosynthesis of the deadly neurotoxic nitroalkane 3-nitropropanoic acid (3-NPA) that acts as an antimetabolite of succinate and irreversibly inhibits succinate dehydrogenase and disrupts mitochondrial oxidative phosphorylation. NpaB facilitates decarboxylation of nitrosuccinic acid produced by the nitrosuccinic acid synthase npaA to yield the final product of the cluster, the lethal mycotoxin 3-NPA. In Metarhizium robertsii (strain ARSEF 23 / ATCC MYA-3075) (Metarhizium anisopliae (strain ARSEF 23)), this protein is Nitrosuccinic acid decarboxylase npaB.